Here is a 60-residue protein sequence, read N- to C-terminus: Mastoparan-B (60 aa).

The first 27 residues, 1 to 27, serve as a signal peptide directing secretion; the sequence is MKNTILILFTAFIALLGFFGMSAEALA. AXPX repeat units lie at residues 27–30, 31–34, 35–38, and 41–44; these read ADPL, AEPL, ADPN, and ADPE. The propeptide occupies 28-45; the sequence is DPLAEPLADPNAEADPEA. Leucine amide is present on Leu-59.

It belongs to the MCD family. Mastoparan subfamily. Expressed by the venom gland.

It localises to the secreted. The protein resides in the target cell membrane. In terms of biological role, antimicrobial and mast cell degranulating peptide. Has broad spectrum antibacterial activity against both Gram-positive (S.aureus MIC=96-128 ug/ml, S.xylosus MIC=2 ug/ml, S.alactolyticus MIC=32 ug/ml, and S.choleraesuis MIC=32 ug/ml) and Gram-negative bacteria (C.koseri MIC=6 ug/ml, E.coli MIC=3-16 ug/ml, K.pneumoniae MIC=128 ug/ml, P.aerugiosa MIC=128 ug/ml, S.typhimurium MIC=64 ug/ml, V.parahamelytics MIC=32 ug/ml, and S.enterica), as well as on fungi (C.albicans, C.glabrata, and C.neoformans). Does not show antimicrobial activity against S.mutans. Affects membrane permeability of E.coli. Also acts as a mast cell degranulating peptide, that causes liberation of histamine from rat peritoneal mast cells. Its mast cell degranulation activity may be related to the activation of G-protein coupled receptors in mast cells as well as interaction with other proteins located in cell endosomal membranes in the mast cells. Whether this peptide shows hemolytic activities is controversial, as Lin et al., 2011 and Ho et al., 1991 found a hemolytic activity on sheep, chicken and human erythrocytes, whereas Kim et al., 2016 found no hemolytic activity on human erythrocytes. In vivo, induces edema in the rat paw. This Vespa basalis (Hornet) protein is Mastoparan-B.